Here is a 220-residue protein sequence, read N- to C-terminus: Thiopurine S-methyltransferase (220 aa).

S-adenosyl-L-methionine contacts are provided by tryptophan 10, leucine 45, glutamate 66, and arginine 123.

Belongs to the class I-like SAM-binding methyltransferase superfamily. TPMT family.

The protein localises to the cytoplasm. The enzyme catalyses S-adenosyl-L-methionine + a thiopurine = S-adenosyl-L-homocysteine + a thiopurine S-methylether.. The chain is Thiopurine S-methyltransferase from Nitrosomonas eutropha (strain DSM 101675 / C91 / Nm57).